A 358-amino-acid chain; its full sequence is Trace amine-associated receptor 7e (358 aa).

Over 1–47 (MATDDASFPWDQDSILSRDLLSALSSQLCYENLNRSCIRSPYSPGPR) the chain is Extracellular. The N-linked (GlcNAc...) asparagine glycan is linked to Asn-34. Intrachain disulfides connect Cys-37–Cys-201 and Cys-120–Cys-205. The helical transmembrane segment at 48 to 68 (LILHAVFGFSAVLAVCGNLLV) threads the bilayer. The Cytoplasmic portion of the chain corresponds to 69 to 83 (MTSILHFRQLHSPAN). A helical membrane pass occupies residues 84–104 (FLVASLACADLLVGLTVMPFS). The Extracellular portion of the chain corresponds to 105-121 (MVRSVEGCWYFGDIYCK). Residues 122-143 (FHSSFDVSFCYSSIFHLCFISV) traverse the membrane as a helical segment. At 144–166 (DRYIAVSDPLIYLTRFTASVSGK) the chain is on the cytoplasmic side. Residues 167-187 (CITFSWFLSIIYSFSLLYTGA) traverse the membrane as a helical segment. At 188 to 212 (SEAGLEDLVSALTCVGGCQLAVNQS) the chain is on the extracellular side. N-linked (GlcNAc...) asparagine glycosylation occurs at Asn-210. Residues 213–233 (WVFINFLLFLVPTLVMMTVYS) traverse the membrane as a helical segment. Over 234–274 (KVFLIAKQQAQNIEKIGKQTARASESYKDRVAKRERKAAKT) the chain is Cytoplasmic. The helical transmembrane segment at 275–295 (LGITVAAFLLSWLPYFIDSII) threads the bilayer. Residues 296–309 (DAFLGFITPTYVYE) lie on the Extracellular side of the membrane. Residues 310 to 333 (ILVWIAYYNSAMNPLIYAFFYPWF) traverse the membrane as a helical segment. At 334–358 (RKAIKLIVTGKILRENSSATNLFPE) the chain is on the cytoplasmic side.

Belongs to the G-protein coupled receptor 1 family.

The protein resides in the cell membrane. In terms of biological role, olfactory receptor specific for N,N-dimethylalkylamines trace amines. Trace amine compounds are enriched in animal body fluids and act on trace amine-associated receptors (TAARs) to elicit both intraspecific and interspecific innate behaviors. Ligand-binding causes a conformation change that triggers signaling via G(s)-class of G alpha proteins (GNAL or GNAS). This is Trace amine-associated receptor 7e from Rattus norvegicus (Rat).